Here is a 684-residue protein sequence, read N- to C-terminus: Protein SEEDLING PLASTID DEVELOPMENT 1 (684 aa).

Residues 1–78 (MRALNSRLVL…FSFDVRSPSS (78 aa)) constitute a chloroplast transit peptide. The segment at 33–91 (SDSSSSFRRTRGARQRIASSKSPASSPSPVRRPSDGFSFDVRSPSSDSSISSRKSPTTA) is disordered. Residues 50–88 (ASSKSPASSPSPVRRPSDGFSFDVRSPSSDSSISSRKSP) show a composition bias toward low complexity. Residue 220–227 (GSPGVGKT) participates in ATP binding. The tract at residues 651–684 (PRRSTKKTLTSSSPQKSADGSMGTTGTRLPFLKD) is disordered. A compositionally biased stretch (low complexity) spans 657–667 (KTLTSSSPQKS).

This sequence belongs to the ycf45 family.

The protein resides in the plastid. It is found in the chloroplast membrane. It localises to the chloroplast envelope. In terms of biological role, required during eoplast (a highly reduced plastid type present during the degreening and dehydration stages of seed maturation) development in embryos and early stages of eoplast redifferentiation during seedling growth. The polypeptide is Protein SEEDLING PLASTID DEVELOPMENT 1 (Arabidopsis thaliana (Mouse-ear cress)).